The primary structure comprises 219 residues: Mediator of RNA polymerase II transcription subunit 7 (219 aa).

The tract at residues 173 to 203 is disordered; it reads LPDPAESDRLNSTVEPMDTGDDGEAGKSRGE.

It belongs to the Mediator complex subunit 7 family. Component of the Mediator complex.

The protein resides in the nucleus. In terms of biological role, component of the Mediator complex, a coactivator involved in the regulated transcription of nearly all RNA polymerase II-dependent genes. Mediator functions as a bridge to convey information from gene-specific regulatory proteins to the basal RNA polymerase II transcription machinery. Mediator is recruited to promoters by direct interactions with regulatory proteins and serves as a scaffold for the assembly of a functional preinitiation complex with RNA polymerase II and the general transcription factors. In Aedes aegypti (Yellowfever mosquito), this protein is Mediator of RNA polymerase II transcription subunit 7 (MED7).